The chain runs to 89 residues: Small ribosomal subunit protein uS15 (89 aa).

Belongs to the universal ribosomal protein uS15 family. As to quaternary structure, part of the 30S ribosomal subunit. Forms a bridge to the 50S subunit in the 70S ribosome, contacting the 23S rRNA.

Its function is as follows. One of the primary rRNA binding proteins, it binds directly to 16S rRNA where it helps nucleate assembly of the platform of the 30S subunit by binding and bridging several RNA helices of the 16S rRNA. In terms of biological role, forms an intersubunit bridge (bridge B4) with the 23S rRNA of the 50S subunit in the ribosome. The protein is Small ribosomal subunit protein uS15 of Buchnera aphidicola subsp. Cinara cedri (strain Cc).